We begin with the raw amino-acid sequence, 576 residues long: Arginine--tRNA ligase (576 aa).

Positions 128–136 (PTGPMHIGH) match the 'HIGH' region motif.

Belongs to the class-I aminoacyl-tRNA synthetase family. In terms of assembly, monomer.

It is found in the cytoplasm. It carries out the reaction tRNA(Arg) + L-arginine + ATP = L-arginyl-tRNA(Arg) + AMP + diphosphate. The protein is Arginine--tRNA ligase of Rickettsia conorii (strain ATCC VR-613 / Malish 7).